Reading from the N-terminus, the 36-residue chain is Glycine-rich protein GWK (36 aa).

Residues 1 to 36 (YKRGGGGWGGGGGWKGGGGGGGGWKGGGGGGKGGGG) are disordered.

Its function is as follows. Possesses antifungal activity against a number of phytopathogenic fungi, including H.sativum and F.culmorum. The chain is Glycine-rich protein GWK from Cucumis melo (Muskmelon).